A 310-amino-acid polypeptide reads, in one-letter code: Ribonuclease Z (310 aa).

Zn(2+)-binding residues include His64, His66, Asp68, His69, His146, Asp215, and His273. The active-site Proton acceptor is Asp68.

The protein belongs to the RNase Z family. As to quaternary structure, homodimer. The cofactor is Zn(2+).

It catalyses the reaction Endonucleolytic cleavage of RNA, removing extra 3' nucleotides from tRNA precursor, generating 3' termini of tRNAs. A 3'-hydroxy group is left at the tRNA terminus and a 5'-phosphoryl group is left at the trailer molecule.. Its function is as follows. Zinc phosphodiesterase, which displays some tRNA 3'-processing endonuclease activity. Probably involved in tRNA maturation, by removing a 3'-trailer from precursor tRNA. The polypeptide is Ribonuclease Z (Aeropyrum pernix (strain ATCC 700893 / DSM 11879 / JCM 9820 / NBRC 100138 / K1)).